Here is a 251-residue protein sequence, read N- to C-terminus: Octanoyltransferase (251 aa).

Residues 56–237 form the BPL/LPL catalytic domain; that stretch reads ADTGDEIWVV…RLIANLDGES (182 aa). Residues 96-103, 168-170, and 181-183 each bind substrate; these read RGGQITYH, ALG, and GLS. The active-site Acyl-thioester intermediate is the C199.

This sequence belongs to the LipB family.

The protein resides in the cytoplasm. The enzyme catalyses octanoyl-[ACP] + L-lysyl-[protein] = N(6)-octanoyl-L-lysyl-[protein] + holo-[ACP] + H(+). It participates in protein modification; protein lipoylation via endogenous pathway; protein N(6)-(lipoyl)lysine from octanoyl-[acyl-carrier-protein]: step 1/2. Its function is as follows. Catalyzes the transfer of endogenously produced octanoic acid from octanoyl-acyl-carrier-protein onto the lipoyl domains of lipoate-dependent enzymes. Lipoyl-ACP can also act as a substrate although octanoyl-ACP is likely to be the physiological substrate. The sequence is that of Octanoyltransferase from Burkholderia ambifaria (strain MC40-6).